A 170-amino-acid polypeptide reads, in one-letter code: Ribosome maturation factor RimM (170 aa).

The region spanning 97–170 (KNEFYWTDLI…QIRVEWGSDW (74 aa)) is the PRC barrel domain.

The protein belongs to the RimM family. Binds ribosomal protein uS19.

It localises to the cytoplasm. In terms of biological role, an accessory protein needed during the final step in the assembly of 30S ribosomal subunit, possibly for assembly of the head region. Essential for efficient processing of 16S rRNA. May be needed both before and after RbfA during the maturation of 16S rRNA. It has affinity for free ribosomal 30S subunits but not for 70S ribosomes. In Dechloromonas aromatica (strain RCB), this protein is Ribosome maturation factor RimM.